The following is a 475-amino-acid chain: Aspartyl/glutamyl-tRNA(Asn/Gln) amidotransferase subunit B (475 aa).

This sequence belongs to the GatB/GatE family. GatB subfamily. Heterotrimer of A, B and C subunits.

The catalysed reaction is L-glutamyl-tRNA(Gln) + L-glutamine + ATP + H2O = L-glutaminyl-tRNA(Gln) + L-glutamate + ADP + phosphate + H(+). It catalyses the reaction L-aspartyl-tRNA(Asn) + L-glutamine + ATP + H2O = L-asparaginyl-tRNA(Asn) + L-glutamate + ADP + phosphate + 2 H(+). Functionally, allows the formation of correctly charged Asn-tRNA(Asn) or Gln-tRNA(Gln) through the transamidation of misacylated Asp-tRNA(Asn) or Glu-tRNA(Gln) in organisms which lack either or both of asparaginyl-tRNA or glutaminyl-tRNA synthetases. The reaction takes place in the presence of glutamine and ATP through an activated phospho-Asp-tRNA(Asn) or phospho-Glu-tRNA(Gln). The protein is Aspartyl/glutamyl-tRNA(Asn/Gln) amidotransferase subunit B of Chlorobium chlorochromatii (strain CaD3).